Consider the following 315-residue polypeptide: tRNA uridine(34) hydroxylase (315 aa).

The region spanning 136 to 230 (SDPETLVIDT…YLEEIPPEES (95 aa)) is the Rhodanese domain. Residue C190 is the Cysteine persulfide intermediate of the active site.

The protein belongs to the TrhO family.

It catalyses the reaction uridine(34) in tRNA + AH2 + O2 = 5-hydroxyuridine(34) in tRNA + A + H2O. Functionally, catalyzes oxygen-dependent 5-hydroxyuridine (ho5U) modification at position 34 in tRNAs. This chain is tRNA uridine(34) hydroxylase, found in Sinorhizobium medicae (strain WSM419) (Ensifer medicae).